A 412-amino-acid chain; its full sequence is Class E basic helix-loop-helix protein 40 (412 aa).

A disordered region spans residues 1 to 21 (MERIPSAQPPPTCLPKAPGLE). Positions 1–139 (MERIPSAQPP…LSGRNVEAGQ (139 aa)) are essential for interaction with BMAL1, E-box binding and repressor activity against the CLOCK-BMAL1 heterodimer. The bHLH domain occupies 52–107 (TYKLPHRLIEKKRRDRINECIAQLKDLLPEHLKLTTLGHLEKAVVLELTLKHVKAL). The necessary for interaction with RXRA and repressor activity against RXRA stretch occupies residues 75–79 (LKDLL). The 34-residue stretch at 142–175 (FCSGFQTCAREVLQYLAKHENTRDLKSSQLVTHL) folds into the Orange domain. A Glycyl lysine isopeptide (Lys-Gly) (interchain with G-Cter in SUMO1, SUMO2 and SUMO3) cross-link involves residue Lys159. Lys167 participates in a covalent cross-link: Glycyl lysine isopeptide (Lys-Gly) (interchain with G-Cter in SUMO2). Disordered regions lie at residues 182 to 257 (LLQG…LRVE) and 279 to 298 (KQES…SDDE). The residue at position 235 (Ser235) is a Phosphoserine. A compositionally biased stretch (basic and acidic residues) spans 248–257 (ESEKSELRVE). Lys279 is covalently cross-linked (Glycyl lysine isopeptide (Lys-Gly) (interchain with G-Cter in SUMO1); alternate). Residue Lys279 forms a Glycyl lysine isopeptide (Lys-Gly) (interchain with G-Cter in SUMO1, SUMO2 and SUMO3); alternate linkage. Lys279 is covalently cross-linked (Glycyl lysine isopeptide (Lys-Gly) (interchain with G-Cter in SUMO2); alternate). A Glycyl lysine isopeptide (Lys-Gly) (interchain with G-Cter in SUMO2) cross-link involves residue Lys288. Residue Ser383 is modified to Phosphoserine.

Homodimer. Heterodimer with BHLHE41/DEC2. Interacts with TCF3/E47. Interacts with ubiquitin-conjugating enzyme UBE2I/UBC9. Interacts with HDAC1, SUMO1, RXRA and BMAL1. Ubiquitinated; which may lead to proteasomal degradation. In terms of processing, sumoylation inhibits its ubiquitination and promotes its negative regulation of the CLOCK-BMAL1 heterodimer transcriptional activator activity.

The protein localises to the cytoplasm. The protein resides in the nucleus. In terms of biological role, transcriptional repressor involved in the regulation of the circadian rhythm by negatively regulating the activity of the clock genes and clock-controlled genes. Acts as the negative limb of a novel autoregulatory feedback loop (DEC loop) which differs from the one formed by the PER and CRY transcriptional repressors (PER/CRY loop). Both these loops are interlocked as it represses the expression of PER1/2 and in turn is repressed by PER1/2 and CRY1/2. Represses the activity of the circadian transcriptional activator: CLOCK-BMAL1|BMAL2 heterodimer by competing for the binding to E-box elements (5'-CACGTG-3') found within the promoters of its target genes. Negatively regulates its own expression and the expression of DBP and BHLHE41/DEC2. Acts as a corepressor of RXR and the RXR-LXR heterodimers and represses the ligand-induced RXRA and NR1H3/LXRA transactivation activity. May be involved in the regulation of chondrocyte differentiation via the cAMP pathway. Represses the transcription of NR0B2 and attentuates the transactivation of NR0B2 by the CLOCK-BMAL1 complex. Drives the circadian rhythm of blood pressure through transcriptional repression of ATP1B1 in the cardiovascular system. In Ovis aries (Sheep), this protein is Class E basic helix-loop-helix protein 40 (BHLHE40).